The primary structure comprises 440 residues: Branched-chain amino acid permease BrnQ (440 aa).

12 helical membrane passes run 9 to 29 (YIII…NLIF), 46 to 66 (AGFL…FVFS), 80 to 100 (PVFG…FFAI), 121 to 141 (SPVS…LLSL), 149 to 169 (IVGK…VAVA), 196 to 216 (GYLT…VNAL), 227 to 247 (LIVV…VMYT), 284 to 304 (ILLG…LITA), 321 to 341 (IAVV…TQLI), 348 to 368 (LLTM…HSVF), 378 to 398 (SLLF…GIKI), and 414 to 434 (IGLG…ILSI).

This sequence belongs to the branched chain amino acid transporter family.

It localises to the cell membrane. Its function is as follows. Branched-chain amino acid transport system which is involved in the uptake of isoleucine and valine. Probably does not transport leucine. Together with BcaP and BraB, plays an important role in the activation of CodY, a branched-chain amino acid-responsive transcriptional regulator that controls the expression of several dozen transcription units in B.subtilis. This is Branched-chain amino acid permease BrnQ from Bacillus subtilis (strain 168).